The chain runs to 792 residues: Carboxysome assembly protein CsoS2 (792 aa).

Basic and acidic residues predominate over residues 1 to 15; sequence MAKQSSRELALERRK. The interval 1-235 is N-terminal domain; that stretch reads MAKQSSRELA…EISQRVRELR (235 aa). 3 disordered regions span residues 1 to 259, 280 to 299, and 338 to 359; these read MAKQ…RNGS, QVVT…NEAS, and HGNR…DEPG. One copy of the N-repeat 1 repeat lies at 7–22; sequence RELALERRKALSNSGK. Composition is skewed to polar residues over residues 17-36 and 69-82; these read LSNS…NRIR and DTSF…SGAS. Residues 94–109 form an N-repeat 2 repeat; it reads RELVLARRDELSRRGQ. Basic and acidic residues-rich tracts occupy residues 97–106 and 113–126; these read VLARRDELSR and KSKD…EKIS. A compositionally biased stretch (polar residues) spans 161-175; the sequence is DTVSRLSSRNSTSRP. N-repeat repeat units lie at residues 187–202 and 225–240; these read RALV…KHGK and REIS…KSGA. Residues 218-236 show a composition bias toward basic and acidic residues; it reads GDPDLSSREISQRVRELRS. A middle region region spans residues 240 to 615; that stretch reads ATGKKRSGAC…VQACGSDAPA (376 aa). M-repeat repeat units follow at residues 270-319, 330-379, 388-427, 441-490, 500-549, and 560-609; these read KVGL…DTFC, KVAV…NQYC, KVGQ…GDQY, KVGS…NTFC, KVGL…SGWC, and RTPK…VQAC. Disordered regions lie at residues 608–662 and 687–792; these read ACGS…GSQI and HFKS…GARG. The tract at residues 616 to 792 is C-terminal domain; the sequence is GSNDHQGSSE…LITVSGGARG (177 aa). 2 stretches are compositionally biased toward polar residues: residues 618–636 and 651–662; these read NDHQ…SVQS and VTGTSYEQGSQI. 2 C-repeat repeats span residues 633 to 678 and 703 to 738; these read SVQS…GTEQ and TRPE…EGAS. A C-terminal peptide (CTP) region spans residues 763-792; the sequence is EVSQPMSRVTGSSGNTDQGSLITVSGGARG. A compositionally biased stretch (polar residues) spans 764–785; that stretch reads VSQPMSRVTGSSGNTDQGSLIT.

This sequence belongs to the CsoS2 family. Probably interacts with the carboxysome major shell protein CsoS1 via the N-terminal domain; this complex probably also interacts with RuBisCO. In terms of processing, has been suggested to undergo ribosomal frameshifting, as does its ortholog in H.neapolitanus. The exact position of the putative frameshift is not given, but it would probably occur in the sixth M-repeat and remove the C-terminus.

It is found in the carboxysome. Its function is as follows. Required for alpha-carboxysome (Cb) assembly, mediates interaction between RuBisCO and the Cb shell. The protein is probably intrinsically disordered. The C-terminal repeats act as the encapsulation signal to target proteins to the Cb; they are necessary and sufficient to target both CsoS2 and foreign proteins to the Cb. The N-terminal repeats of this protein bind simultaneously to both subunits of RuBisCO. Probably also interacts with the major shell proteins (CsoS1); that interaction would increase the local concentration of CsoS2 so that it can condense RuBisCO and full carboxysomes can be formed. In Prochlorococcus marinus (strain MIT 9313), this protein is Carboxysome assembly protein CsoS2.